The chain runs to 444 residues: Chromosomal replication initiator protein DnaA (444 aa).

The domain I, interacts with DnaA modulators stretch occupies residues 1 to 66 (MKSEIIESLK…SKTLRELFGK (66 aa)). The segment at 66-100 (KPMDFRIEHASAKTEEKLDSNEDEPLVKKRPLILT) is domain II. The domain III, AAA+ region stretch occupies residues 101–317 (PLNPILTFEN…GALVKLIMYQ (217 aa)). Positions 144, 146, 147, and 148 each coordinate ATP. The segment at 318–444 (QISGEKVDLQ…VTGQILDQSV (127 aa)) is domain IV, binds dsDNA.

This sequence belongs to the DnaA family. Oligomerizes as a right-handed, spiral filament on DNA at oriC.

The protein localises to the cytoplasm. Functionally, plays an essential role in the initiation and regulation of chromosomal replication. ATP-DnaA binds to the origin of replication (oriC) to initiate formation of the DNA replication initiation complex once per cell cycle. Binds the DnaA box (a 9 base pair repeat at the origin) and separates the double-stranded (ds)DNA. Forms a right-handed helical filament on oriC DNA; dsDNA binds to the exterior of the filament while single-stranded (ss)DNA is stabiized in the filament's interior. The ATP-DnaA-oriC complex binds and stabilizes one strand of the AT-rich DNA unwinding element (DUE), permitting loading of DNA polymerase. After initiation quickly degrades to an ADP-DnaA complex that is not apt for DNA replication. Binds acidic phospholipids. The chain is Chromosomal replication initiator protein DnaA from Pseudothermotoga lettingae (strain ATCC BAA-301 / DSM 14385 / NBRC 107922 / TMO) (Thermotoga lettingae).